We begin with the raw amino-acid sequence, 186 residues long: TATA-box-binding protein E (186 aa).

2 repeat units span residues 10–86 and 101–179.

Belongs to the TBP family.

Functionally, general factor that plays a role in the activation of archaeal genes transcribed by RNA polymerase. Binds specifically to the TATA box promoter element which lies close to the position of transcription initiation. This Halobacterium salinarum (strain ATCC 700922 / JCM 11081 / NRC-1) (Halobacterium halobium) protein is TATA-box-binding protein E (tbpE).